Here is a 180-residue protein sequence, read N- to C-terminus: Minor allergen Can f 2 (180 aa).

A signal peptide spans 1-18; sequence MQLLLLTVGLALICGLQA. A glycan (N-linked (GlcNAc...) asparagine) is linked at asparagine 45. Cysteines 82 and 175 form a disulfide.

Belongs to the calycin superfamily. Lipocalin family. In terms of tissue distribution, tongue epithelial tissue and parotid gland.

The protein localises to the secreted. This is Minor allergen Can f 2 from Canis lupus familiaris (Dog).